The chain runs to 188 residues: Elongation factor P (188 aa).

Residue Lys-34 is modified to N6-(3,6-diaminohexanoyl)-5-hydroxylysine.

Belongs to the elongation factor P family. May be beta-lysylated on the epsilon-amino group of Lys-34 by the combined action of EpmA and EpmB, and then hydroxylated on the C5 position of the same residue by EpmC (if this protein is present). Lysylation is critical for the stimulatory effect of EF-P on peptide-bond formation. The lysylation moiety may extend toward the peptidyltransferase center and stabilize the terminal 3-CCA end of the tRNA. Hydroxylation of the C5 position on Lys-34 may allow additional potential stabilizing hydrogen-bond interactions with the P-tRNA.

Its subcellular location is the cytoplasm. Its pathway is protein biosynthesis; polypeptide chain elongation. Its function is as follows. Involved in peptide bond synthesis. Alleviates ribosome stalling that occurs when 3 or more consecutive Pro residues or the sequence PPG is present in a protein, possibly by augmenting the peptidyl transferase activity of the ribosome. Modification of Lys-34 is required for alleviation. The sequence is that of Elongation factor P from Xanthomonas axonopodis pv. citri (strain 306).